The chain runs to 182 residues: UPF0398 protein lwe1908 (182 aa).

The protein belongs to the UPF0398 family.

The protein is UPF0398 protein lwe1908 of Listeria welshimeri serovar 6b (strain ATCC 35897 / DSM 20650 / CCUG 15529 / CIP 8149 / NCTC 11857 / SLCC 5334 / V8).